The primary structure comprises 265 residues: tRNA pseudouridine synthase A (265 aa).

Asp-58 serves as the catalytic Nucleophile. Tyr-116 lines the substrate pocket.

The protein belongs to the tRNA pseudouridine synthase TruA family. As to quaternary structure, homodimer.

It catalyses the reaction uridine(38/39/40) in tRNA = pseudouridine(38/39/40) in tRNA. Formation of pseudouridine at positions 38, 39 and 40 in the anticodon stem and loop of transfer RNAs. This Neisseria gonorrhoeae (strain NCCP11945) protein is tRNA pseudouridine synthase A.